A 364-amino-acid polypeptide reads, in one-letter code: MLKRTPLFDLYKEYGGKTIDFGGWELPVQFSSIKEEHEAVRTKAGLFDVSHMGEVEITGTDSLPFLQKLLTNDVSTLKEGGAQYTAMCYEDGGTIDDLLVYKKAANVYMLVINAANIDKDVDWMNKHIKGDVSVRNVSDEIALLALQGPKAEAILKQVADHDLAELKPFMFRDDAAVGSVQALVSRTGYTGEDGFEIYCRNEDAACIWKLLLETGKDSGLVPCGLGARDTLRFEAKLPLYGQELSKDITPIEAGIGFAVKTNKASDFIGKAVLASQKEHGADRKLVGLEMIDKGIPRHGYAVYYQGEQAGEVTTGTQSPTLKKNVGLALLKKEACALDTVVEVEIRNKRLKAKIVKTPFYKRQP.

The protein belongs to the GcvT family. As to quaternary structure, the glycine cleavage system is composed of four proteins: P, T, L and H.

It catalyses the reaction N(6)-[(R)-S(8)-aminomethyldihydrolipoyl]-L-lysyl-[protein] + (6S)-5,6,7,8-tetrahydrofolate = N(6)-[(R)-dihydrolipoyl]-L-lysyl-[protein] + (6R)-5,10-methylene-5,6,7,8-tetrahydrofolate + NH4(+). The glycine cleavage system catalyzes the degradation of glycine. The protein is Aminomethyltransferase of Bacillus licheniformis (strain ATCC 14580 / DSM 13 / JCM 2505 / CCUG 7422 / NBRC 12200 / NCIMB 9375 / NCTC 10341 / NRRL NRS-1264 / Gibson 46).